The sequence spans 203 residues: Nascent polypeptide-associated complex subunit alpha-like protein 1 (203 aa).

Basic and acidic residues predominate over residues 1–23 (MTTEEKEILAAKLEEQKIDLDKP). Positions 1-71 (MTTEEKEILA…SEKKSRKAML (71 aa)) are disordered. Acidic residues predominate over residues 24–50 (EVEDDDDNEDDDSDDDDKDDDEADGLD). A Phosphoserine modification is found at S36. In terms of domain architecture, NAC-A/B spans 60 to 125 (SRSEKKSRKA…AKIEDLSSQI (66 aa)). Residues 158 to 203 (EVDEEGVEPKDIELVMTQAGVSRPNAVKALKAADGDIVSAIMELTT) form the UBA domain.

It belongs to the NAC-alpha family.

Its function is as follows. May promote appropriate targeting of ribosome-nascent polypeptide complexes. This chain is Nascent polypeptide-associated complex subunit alpha-like protein 1, found in Arabidopsis thaliana (Mouse-ear cress).